Consider the following 384-residue polypeptide: 8-amino-7-oxononanoate synthase (384 aa).

Position 21 (arginine 21) interacts with substrate. 108–109 contributes to the pyridoxal 5'-phosphate binding site; sequence GF. Position 133 (histidine 133) interacts with substrate. 3 residues coordinate pyridoxal 5'-phosphate: serine 179, histidine 207, and threonine 233. An N6-(pyridoxal phosphate)lysine modification is found at lysine 236. A substrate-binding site is contributed by threonine 352.

This sequence belongs to the class-II pyridoxal-phosphate-dependent aminotransferase family. BioF subfamily. Homodimer. It depends on pyridoxal 5'-phosphate as a cofactor.

It catalyses the reaction 6-carboxyhexanoyl-[ACP] + L-alanine + H(+) = (8S)-8-amino-7-oxononanoate + holo-[ACP] + CO2. It functions in the pathway cofactor biosynthesis; biotin biosynthesis. Its function is as follows. Catalyzes the decarboxylative condensation of pimeloyl-[acyl-carrier protein] and L-alanine to produce 8-amino-7-oxononanoate (AON), [acyl-carrier protein], and carbon dioxide. The sequence is that of 8-amino-7-oxononanoate synthase from Escherichia coli O9:H4 (strain HS).